The chain runs to 449 residues: Packaging protein 1 (449 aa).

The segment at 1-77 is disordered; sequence METRGRRPAA…QPAKRGDMLD (77 aa). 171-178 is a binding site for ATP; sequence GPTGCGKS. The interval 440 to 449 is DNA-binding; it reads RAYRARKTPK.

The protein belongs to the adenoviridae packaging protein 1 family. As to quaternary structure, homodimer. Part of a genome packaging complex composed of packaging proteins 1, 2 and 3; this complex specifically binds to the packaging sequence on the left end of viral genomic DNA and performs packaging of the viral genome. Interacts with protein 33K.

The protein resides in the virion. Its subcellular location is the host nucleus. It is found in the host nucleoplasm. It localises to the host nucleolus. Functionally, component of the packaging machinery which encapsidates the viral DNA into preformed capsids and transcriptional activator of the viral major late promoter (MLP). Binds, along with packaging proteins 2 and 3, to the specific packaging sequence on the left end of viral genomic DNA and displays ATPase activity thereby providing the power stroke of the packaging machinery. The activity of packaging protein IVa2 is stimulated by protein 33K which acts as a terminase. May be the protein that pumps DNA into the capsid powered by ATP hydrolysis. Specifically binds to the 5'-CG-3' nucleotides of the repeats making up the packaging sequence. Component of the DEF-A and DEF-B transcription factors that bind downstream elements of the major late promoter (MLP), and stimulate transcription from the MLP after initiation of viral DNA replication. DEF-A is a heterodimer packaging proteins 1 and 2 and DEF-B is a homodimer of packaging protein 1. The chain is Packaging protein 1 from Homo sapiens (Human).